The primary structure comprises 619 residues: Guanylate cyclase soluble subunit beta-1 (619 aa).

His105 contributes to the heme binding site. The region spanning 421–554 (TILFSGIVGF…NTVNLTSRTE (134 aa)) is the Guanylate cyclase domain.

Belongs to the adenylyl cyclase class-4/guanylyl cyclase family. The active enzyme is formed by a heterodimer of an alpha and a beta subunit. Heterodimer with GUCY1A1. Can also form inactive homodimers in vitro. Heme is required as a cofactor. In terms of tissue distribution, lung and brain.

The protein localises to the cytoplasm. It carries out the reaction GTP = 3',5'-cyclic GMP + diphosphate. Activated by nitric oxide in the presence of magnesium or manganese ions, binding of NO to the heme iron increases catalytic activity up to 400 folds. Its function is as follows. Mediates responses to nitric oxide (NO) by catalyzing the biosynthesis of the signaling molecule cGMP. This Bos taurus (Bovine) protein is Guanylate cyclase soluble subunit beta-1 (GUCY1B1).